A 282-amino-acid chain; its full sequence is Probable phosphatase C1620.13 (282 aa).

His-61 serves as the catalytic Tele-phosphohistidine intermediate. Residue Glu-135 is the Proton donor/acceptor of the active site.

This sequence belongs to the phosphoglycerate mutase family. BPG-dependent PGAM subfamily.

The protein resides in the nucleus. The chain is Probable phosphatase C1620.13 from Schizosaccharomyces pombe (strain 972 / ATCC 24843) (Fission yeast).